Here is a 490-residue protein sequence, read N- to C-terminus: Cytochrome P450 2C20 (490 aa).

Cys435 provides a ligand contact to heme.

Belongs to the cytochrome P450 family. Requires heme as cofactor.

The protein localises to the endoplasmic reticulum membrane. Its subcellular location is the microsome membrane. It carries out the reaction an organic molecule + reduced [NADPH--hemoprotein reductase] + O2 = an alcohol + oxidized [NADPH--hemoprotein reductase] + H2O + H(+). Its function is as follows. Cytochromes P450 are a group of heme-thiolate monooxygenases. In liver microsomes, this enzyme is involved in an NADPH-dependent electron transport pathway. It oxidizes a variety of structurally unrelated compounds, including steroids, fatty acids, and xenobiotics. The protein is Cytochrome P450 2C20 (CYP2C20) of Macaca fascicularis (Crab-eating macaque).